Here is a 206-residue protein sequence, read N- to C-terminus: Large ribosomal subunit protein uL4 (206 aa).

Residues 49 to 79 are disordered; it reads KVKTRSEISRTTKKMYKQKGTGNARHGAASA.

The protein belongs to the universal ribosomal protein uL4 family. Part of the 50S ribosomal subunit.

In terms of biological role, one of the primary rRNA binding proteins, this protein initially binds near the 5'-end of the 23S rRNA. It is important during the early stages of 50S assembly. It makes multiple contacts with different domains of the 23S rRNA in the assembled 50S subunit and ribosome. Functionally, forms part of the polypeptide exit tunnel. The protein is Large ribosomal subunit protein uL4 of Methylobacterium sp. (strain 4-46).